The chain runs to 784 residues: LPS-assembly protein LptD (784 aa).

An N-terminal signal peptide occupies residues 1 to 24 (MKKRIPTLLATMIATALYSQQGLA). Cystine bridges form between cysteine 31–cysteine 724 and cysteine 173–cysteine 725.

The protein belongs to the LptD family. As to quaternary structure, component of the lipopolysaccharide transport and assembly complex. Interacts with LptE and LptA. In terms of processing, contains two intramolecular disulfide bonds.

It is found in the cell outer membrane. Its function is as follows. Together with LptE, is involved in the assembly of lipopolysaccharide (LPS) at the surface of the outer membrane. This Shigella flexneri protein is LPS-assembly protein LptD.